A 373-amino-acid chain; its full sequence is 4-hydroxy-3-methylbut-2-en-1-yl diphosphate synthase (flavodoxin) (373 aa).

[4Fe-4S] cluster-binding residues include Cys270, Cys273, Cys305, and Glu312.

Belongs to the IspG family. The cofactor is [4Fe-4S] cluster.

The enzyme catalyses (2E)-4-hydroxy-3-methylbut-2-enyl diphosphate + oxidized [flavodoxin] + H2O + 2 H(+) = 2-C-methyl-D-erythritol 2,4-cyclic diphosphate + reduced [flavodoxin]. Its pathway is isoprenoid biosynthesis; isopentenyl diphosphate biosynthesis via DXP pathway; isopentenyl diphosphate from 1-deoxy-D-xylulose 5-phosphate: step 5/6. Converts 2C-methyl-D-erythritol 2,4-cyclodiphosphate (ME-2,4cPP) into 1-hydroxy-2-methyl-2-(E)-butenyl 4-diphosphate. This is 4-hydroxy-3-methylbut-2-en-1-yl diphosphate synthase (flavodoxin) from Proteus mirabilis (strain HI4320).